The primary structure comprises 554 residues: Intraflagellar transport protein 56 (554 aa).

The disordered stretch occupies residues 1–27 (MMLSRAKPAVGGESPHTDKRKKKGRKI). The span at 18 to 27 (DKRKKKGRKI) shows a compositional bias: basic residues. TPR repeat units lie at residues 57 to 90 (EDTN…ENCN), 92 to 125 (EVWV…LQNR), 151 to 184 (KEDQ…NREY), and 468 to 501 (ANDC…EGKR).

It belongs to the IFT56 family. As to quaternary structure, component of the IFT complex B. Interacts with IFT46; the interaction is direct.

Its subcellular location is the cell projection. It is found in the cilium. Its function is as follows. Component of the intraflagellar transport (IFT) complex B required for transport of proteins in the motile cilium. Required for transport of specific ciliary cargo proteins related to motility, while it is neither required for IFT complex B assembly or motion nor for cilium assembly. Required for efficient coupling between the accumulation of GLI2 and GLI3 at the ciliary tips and their dissociation from the negative regulator SUFU. Plays a key role in maintaining the integrity of the IFT complex B and the proper ciliary localization of the IFT complex B components. Not required for IFT complex A ciliary localization or function. Essential for maintaining proper microtubule organization within the ciliary axoneme. This is Intraflagellar transport protein 56 from Rattus norvegicus (Rat).